The chain runs to 208 residues: N-(5'-phosphoribosyl)anthranilate isomerase (208 aa).

The protein belongs to the TrpF family.

It catalyses the reaction N-(5-phospho-beta-D-ribosyl)anthranilate = 1-(2-carboxyphenylamino)-1-deoxy-D-ribulose 5-phosphate. It functions in the pathway amino-acid biosynthesis; L-tryptophan biosynthesis; L-tryptophan from chorismate: step 3/5. This is N-(5'-phosphoribosyl)anthranilate isomerase from Neisseria gonorrhoeae (strain NCCP11945).